The chain runs to 70 residues: Conotoxin elongated-tx3a-a (70 aa).

Residues 1-24 (MLKMGVVLFIFLVLFPLATLQLDA) form the signal peptide. Residues 25 to 44 (DQPVERYAENKQLLSPDERR) constitute a propeptide that is removed on maturation. 3 disulfide bridges follow: cysteine 55–cysteine 68, cysteine 56–cysteine 66, and cysteine 61–cysteine 69. Tryptophan 58 bears the 6'-bromotryptophan; partial mark. The residue at position 69 (cysteine 69) is a Cysteine amide; partial.

It belongs to the conotoxin M superfamily. Two short peptides are produced from this precursor; Conotoxin tx3a-b is amidated at Cys-69 (but has no bromotryptophan), whereas conotoxin tx3a-a has an unmodified Gly-70 and a bromotryptophan. Two elongated peptides are also produced; Conotoxin elongated-tx3a-b is amidated at Cys-69 (but has no bromotryptophan), whereas conotoxin elongated tx3a-a has an unmodified Gly-70 (but has no bromotryptophan). Post-translationally, ju et al. (2022) describe a disulfide connectivity (C55-C61; C56-C69; C66-C68) that differs from that of Han and colleagues (2006), McDougal et al. (2008), and Ueberheide et al. (2009). In terms of tissue distribution, expressed by the venom duct. Is present in all duct parts with a highest content in part 2 (proximal of the venom bulb) and then decreases in concentration toward the end of the duct.

The protein resides in the secreted. In terms of biological role, intracranial injection into mice causes scratching and hyperactivity. In vitro, inhibits proliferation of the mice ovarian cancer cells ID8. This is Conotoxin elongated-tx3a-a from Conus textile (Cloth-of-gold cone).